The chain runs to 445 residues: O-fucosyltransferase 23 (445 aa).

The helical; Signal-anchor for type II membrane protein transmembrane segment at 12–34 (IFSKSVACKCLVLVGIALFYRAL) threads the bilayer. Asn97 and Asn179 each carry an N-linked (GlcNAc...) asparagine glycan. Residue 258–260 (HMR) coordinates substrate. Asn294 carries N-linked (GlcNAc...) asparagine glycosylation. 374-375 (TF) provides a ligand contact to substrate. A glycan (N-linked (GlcNAc...) asparagine) is linked at Asn424.

The protein belongs to the glycosyltransferase GT106 family. As to expression, expressed in dry pollen grains and germinating pollen grains.

Its subcellular location is the golgi apparatus membrane. It participates in glycan metabolism. Its function is as follows. Probable protein O-fucosyltransferase required for correct pollen tube penetration through the stigma-style interface. May be involved in protein O-glycosylation events during pollen-pistil interactions. In Arabidopsis thaliana (Mouse-ear cress), this protein is O-fucosyltransferase 23.